A 161-amino-acid polypeptide reads, in one-letter code: NADH-quinone oxidoreductase subunit I (161 aa).

2 consecutive 4Fe-4S ferredoxin-type domains span residues 52-82 and 92-121; these read LRRY…IESS and TRYD…QGPN. [4Fe-4S] cluster is bound by residues C62, C65, C68, C72, C101, C104, C107, and C111.

The protein belongs to the complex I 23 kDa subunit family. In terms of assembly, NDH-1 is composed of 14 different subunits. Subunits NuoA, H, J, K, L, M, N constitute the membrane sector of the complex. The cofactor is [4Fe-4S] cluster.

It localises to the cell inner membrane. It carries out the reaction a quinone + NADH + 5 H(+)(in) = a quinol + NAD(+) + 4 H(+)(out). NDH-1 shuttles electrons from NADH, via FMN and iron-sulfur (Fe-S) centers, to quinones in the respiratory chain. The immediate electron acceptor for the enzyme in this species is believed to be ubiquinone. Couples the redox reaction to proton translocation (for every two electrons transferred, four hydrogen ions are translocated across the cytoplasmic membrane), and thus conserves the redox energy in a proton gradient. The chain is NADH-quinone oxidoreductase subunit I from Pelagibacter ubique (strain HTCC1062).